A 155-amino-acid polypeptide reads, in one-letter code: Probable cyclic pyranopterin monophosphate synthase (155 aa).

Substrate-binding positions include 74-76 (MCH) and 110-111 (ME). Asp-125 is an active-site residue.

It belongs to the MoaC family. In terms of assembly, homohexamer; trimer of dimers.

It catalyses the reaction (8S)-3',8-cyclo-7,8-dihydroguanosine 5'-triphosphate = cyclic pyranopterin phosphate + diphosphate. Its pathway is cofactor biosynthesis; molybdopterin biosynthesis. Functionally, catalyzes the conversion of (8S)-3',8-cyclo-7,8-dihydroguanosine 5'-triphosphate to cyclic pyranopterin monophosphate (cPMP). In Methanoregula boonei (strain DSM 21154 / JCM 14090 / 6A8), this protein is Probable cyclic pyranopterin monophosphate synthase.